The chain runs to 312 residues: Dihydroorotate dehydrogenase B (NAD(+)), catalytic subunit (312 aa).

Residues S23 and 47–48 contribute to the FMN site; that span reads KA. Residues K47 and 71 to 75 contribute to the substrate site; that span reads NAIGL. N102 and N130 together coordinate FMN. N130 contacts substrate. C133 acts as the Nucleophile in catalysis. Residues K168 and I194 each contribute to the FMN site. A substrate-binding site is contributed by 195–196; that stretch reads NT. Residues G220, 246–247, and 268–269 each bind FMN; these read GG and GT.

This sequence belongs to the dihydroorotate dehydrogenase family. Type 1 subfamily. As to quaternary structure, heterotetramer of 2 PyrK and 2 PyrD type B subunits. The cofactor is FMN.

It is found in the cytoplasm. It carries out the reaction (S)-dihydroorotate + NAD(+) = orotate + NADH + H(+). It functions in the pathway pyrimidine metabolism; UMP biosynthesis via de novo pathway; orotate from (S)-dihydroorotate (NAD(+) route): step 1/1. Its function is as follows. Catalyzes the conversion of dihydroorotate to orotate with NAD(+) as electron acceptor. This chain is Dihydroorotate dehydrogenase B (NAD(+)), catalytic subunit (pyrDB), found in Enterococcus faecalis (strain ATCC 700802 / V583).